Consider the following 447-residue polypeptide: Tubulin beta chain (447 aa).

Residues Gln11, Glu69, Ser138, Gly142, Thr143, Gly144, Asn204, and Asn226 each contribute to the GTP site. Glu69 serves as a coordination point for Mg(2+). A disordered region spans residues 424 to 447; the sequence is QYQEASVSEGEEEYDEEAPLEAEE. Residues 432-447 show a composition bias toward acidic residues; sequence EGEEEYDEEAPLEAEE.

It belongs to the tubulin family. Dimer of alpha and beta chains. A typical microtubule is a hollow water-filled tube with an outer diameter of 25 nm and an inner diameter of 15 nM. Alpha-beta heterodimers associate head-to-tail to form protofilaments running lengthwise along the microtubule wall with the beta-tubulin subunit facing the microtubule plus end conferring a structural polarity. Microtubules usually have 13 protofilaments but different protofilament numbers can be found in some organisms and specialized cells. Mg(2+) is required as a cofactor.

Its subcellular location is the cytoplasm. It localises to the cytoskeleton. Tubulin is the major constituent of microtubules, a cylinder consisting of laterally associated linear protofilaments composed of alpha- and beta-tubulin heterodimers. Microtubules grow by the addition of GTP-tubulin dimers to the microtubule end, where a stabilizing cap forms. Below the cap, tubulin dimers are in GDP-bound state, owing to GTPase activity of alpha-tubulin. The protein is Tubulin beta chain (TUB1) of Cochliobolus heterostrophus (Southern corn leaf blight fungus).